A 200-amino-acid polypeptide reads, in one-letter code: Lipopolysaccharide core heptose(II)-phosphate phosphatase (200 aa).

Positions 1–25 are cleaved as a signal peptide; that stretch reads MLAFCRSSLKSKKYFIILLALAAIA.

Belongs to the phosphoglycerate mutase family. Ais subfamily.

It is found in the periplasm. It functions in the pathway bacterial outer membrane biogenesis; lipopolysaccharide metabolism. Functionally, catalyzes the dephosphorylation of heptose(II) of the outer membrane lipopolysaccharide core. The sequence is that of Lipopolysaccharide core heptose(II)-phosphate phosphatase from Escherichia coli O157:H7.